An 87-amino-acid polypeptide reads, in one-letter code: Toxin CsEv3 (87 aa).

Positions 1–19 are cleaved as a signal peptide; that stretch reads MNSLLMITACLFLIGTVWA. The LCN-type CS-alpha/beta domain occupies 20-85; it reads KEGYLVNKST…TYPLPNKSCG (66 aa). Cystine bridges form between cysteine 31–cysteine 84, cysteine 35–cysteine 60, cysteine 44–cysteine 65, and cysteine 48–cysteine 67. At cysteine 84 the chain carries Cysteine amide.

It belongs to the long (4 C-C) scorpion toxin superfamily. Sodium channel inhibitor family. Beta subfamily. In terms of tissue distribution, expressed by the venom gland.

It localises to the secreted. Its function is as follows. Beta toxins bind voltage-independently at site-4 of sodium channels (Nav) and shift the voltage of activation toward more negative potentials thereby affecting sodium channel activation and promoting spontaneous and repetitive firing. Induces immediate paralysis in crickets after injection, with a total paralysis occurring within 15-30 minutes and lasting for 1-2 hours. Is also lethal to vertebrate (chicks) when injected in very high dosages (more that 100 mg/kg). This Centruroides sculpturatus (Arizona bark scorpion) protein is Toxin CsEv3.